A 431-amino-acid polypeptide reads, in one-letter code: Tyrosine--tRNA ligase (431 aa).

Y34 provides a ligand contact to L-tyrosine. The short motif at 39–48 (PTADSLHIGH) is the 'HIGH' region element. Positions 171 and 175 each coordinate L-tyrosine. The short motif at 231 to 235 (KFGKT) is the 'KMSKS' region element. Residue K234 participates in ATP binding. The S4 RNA-binding domain maps to 353–422 (INVVEALVKT…GKYTILRRGK (70 aa)).

The protein belongs to the class-I aminoacyl-tRNA synthetase family. TyrS type 1 subfamily. As to quaternary structure, homodimer.

The protein resides in the cytoplasm. The enzyme catalyses tRNA(Tyr) + L-tyrosine + ATP = L-tyrosyl-tRNA(Tyr) + AMP + diphosphate + H(+). Functionally, catalyzes the attachment of tyrosine to tRNA(Tyr) in a two-step reaction: tyrosine is first activated by ATP to form Tyr-AMP and then transferred to the acceptor end of tRNA(Tyr). The protein is Tyrosine--tRNA ligase of Neisseria meningitidis serogroup C (strain 053442).